A 153-amino-acid polypeptide reads, in one-letter code: Proline-rich membrane anchor 1 (153 aa).

A signal peptide spans 1–35 (MLLRDLVPRHGCCWPSLLLHCALHPLWGLVQVTHA). At 36–92 (EPQKSCSKVTDSCQHICQCRPPPPLPPPPPPPPPPRLLSAPAPNSTSCPAEDSWWSG) the chain is on the extracellular side. The 15-residue stretch at 56-70 (PPPPLPPPPPPPPPP) folds into the PRAD domain. The span at 59 to 71 (PLPPPPPPPPPPR) shows a compositional bias: pro residues. Residues 59–79 (PLPPPPPPPPPPRLLSAPAPN) are disordered. N-linked (GlcNAc...) asparagine glycosylation occurs at asparagine 79. A helical membrane pass occupies residues 93–113 (LVIIVAVVCASLVFLTVLVII). At 114–153 (CYKAIKRKPLRKDENGTSVAEYPMSSSQSHKGVDVNAAVV) the chain is on the cytoplasmic side. A disordered region spans residues 129–153 (GTSVAEYPMSSSQSHKGVDVNAAVV).

As to quaternary structure, interacts with ACHE, probably through disulfide bonds. In terms of tissue distribution, predominantly expressed in the central nervous system, including in the brain. Also expressed in muscle, heart and kidney. Isoform 1 may be predominant in the cortex and striatum, while isoform 2 is more abundant in the cerebellum.

The protein localises to the cell membrane. It is found in the cell junction. The protein resides in the synapse. In terms of biological role, required to anchor acetylcholinesterase (ACHE) to the basal lamina of the neuromuscular junction and to the membrane of neuronal synapses in brain. Also able to organize ACHE into tetramers. The sequence is that of Proline-rich membrane anchor 1 (Prima1) from Mus musculus (Mouse).